The following is a 471-amino-acid chain: Putative multidrug resistance protein MdtD (471 aa).

Residues 1–11 lie on the Periplasmic side of the membrane; sequence MTDLPDSTRWR. The helical transmembrane segment at 12-32 threads the bilayer; it reads LWIVAFGFFMQSLDTTIVNTA. The Cytoplasmic segment spans residues 33–48; the sequence is LPSMAQSLGESPLHMH. A helical membrane pass occupies residues 49 to 69; the sequence is MVIVSYVLTVAVMLPASGWLA. Residues 70–76 are Periplasmic-facing; the sequence is DKVGVRN. A helical transmembrane segment spans residues 77–97; sequence IFFTAIVLFTLGSLFCALSGT. At 98 to 101 the chain is on the cytoplasmic side; the sequence is LNEL. A helical membrane pass occupies residues 102 to 124; it reads LLARALQGVGGAMMVPVGRLTVM. At 125-137 the chain is on the periplasmic side; sequence KIVPREQYMAAMT. A helical transmembrane segment spans residues 138–158; that stretch reads FVTLPGQVGPLLGPALGGLLV. Over 159–164 the chain is Cytoplasmic; sequence EYASWH. A helical transmembrane segment spans residues 165-185; that stretch reads WIFLINIPVGIIGAIATLMLM. Topologically, residues 186–196 are periplasmic; it reads PNYTMQTRRFD. A helical transmembrane segment spans residues 197-217; it reads LSGFLLLAVGMAVLTLALDGS. Over 218-224 the chain is Cytoplasmic; the sequence is KGTGLSP. The helical transmembrane segment at 225-245 threads the bilayer; that stretch reads LAIAGLVAVGVVALVLYLLHA. Residues 246 to 262 lie on the Periplasmic side of the membrane; sequence QNNNRALFSLKLFRTRT. A helical transmembrane segment spans residues 263-283; that stretch reads FSLGLAGSFAGRIGSGMLPFM. Topologically, residues 284-285 are cytoplasmic; it reads TP. Residues 286 to 306 form a helical membrane-spanning segment; the sequence is VFLQIGLGFSPFHAGLMMIPM. The Periplasmic segment spans residues 307 to 341; that stretch reads VLGSMGMKRIVVQVVNRFGYRRVLVATTLGLSLVT. Residues 342 to 362 traverse the membrane as a helical segment; the sequence is LLFMTTALLGWYYVLPFVLFL. Over 363-395 the chain is Cytoplasmic; sequence QGMVNSTRFSSMNTLTLKDLPDNLASSGNSLLS. Residues 396–416 form a helical membrane-spanning segment; that stretch reads MIMQLSMSIGVTIAGLLLGLF. Topologically, residues 417–430 are periplasmic; sequence GSQHVSVDSGTTQT. Residues 431-451 form a helical membrane-spanning segment; sequence VFMYTWLSMASIIALPAFIFA. Over 452–471 the chain is Cytoplasmic; sequence RVPNDTHQNVAISRRKRSAQ.

Belongs to the major facilitator superfamily. TCR/Tet family.

It is found in the cell inner membrane. The chain is Putative multidrug resistance protein MdtD from Escherichia coli O6:K15:H31 (strain 536 / UPEC).